The chain runs to 191 residues: Protein YceI (191 aa).

An N-terminal signal peptide occupies residues 1-22 (MKKSLLGLTFASLMFSAGSAVA).

It belongs to the UPF0312 family. Type 1 subfamily.

It is found in the periplasm. This chain is Protein YceI, found in Escherichia coli O6:H1 (strain CFT073 / ATCC 700928 / UPEC).